The chain runs to 444 residues: Acyl-CoA 6-desaturase (444 aa).

A disordered region spans residues 1-21 (MGKGGNQGEGSTERQAPMPTF). At 1–130 (MGKGGNQGEG…EDMNLFKTNH (130 aa)) the chain is on the cytoplasmic side. The region spanning 18-95 (MPTFRWEEIQ…LKPLLIGELA (78 aa)) is the Cytochrome b5 heme-binding domain. A helical membrane pass occupies residues 131–151 (LFFFLLLSHIIVMESLAWFIL). S152 is a topological domain (lumenal). The helical transmembrane segment at 153–173 (YFGTGWIPTLVTAFVLATSQA) threads the bilayer. Over 174–264 (QAGWLQHDYG…KYLPYNHQHE (91 aa)) the chain is Cytoplasmic. The short motif at 180-184 (HDYGH) is the Histidine box-1 element. Positions 217–221 (HFQHH) match the Histidine box-2 motif. Residues 265 to 285 (YFFLIGPPLLIPMYFQYQIIM) traverse the membrane as a helical segment. The Lumenal segment spans residues 286–305 (TMISRRDWVDLAWAISYYMR). Residues 306–326 (FFYTYIPFYGILGALVFLNFI) traverse the membrane as a helical segment. The Cytoplasmic segment spans residues 327–444 (RFLESHWFVW…ELWLDAYLHK (118 aa)). A Histidine box-3 motif is present at residues 382–386 (QIEHH).

This sequence belongs to the fatty acid desaturase type 1 family. In terms of tissue distribution, highly expressed in the adrenal gland, liver, brain, and testis, tissues where lipogenesis and steroidogenesis are active. Also detected in lung, heart, and skeletal muscle.

The protein localises to the endoplasmic reticulum membrane. The enzyme catalyses (9Z,12Z)-octadecadienoyl-CoA + 2 Fe(II)-[cytochrome b5] + O2 + 2 H(+) = (6Z,9Z,12Z)-octadecatrienoyl-CoA + 2 Fe(III)-[cytochrome b5] + 2 H2O. It carries out the reaction (9Z,12Z,15Z)-octadecatrienoyl-CoA + 2 Fe(II)-[cytochrome b5] + O2 + 2 H(+) = (6Z,9Z,12Z,15Z)-octadecatetraenoyl-CoA + 2 Fe(III)-[cytochrome b5] + 2 H2O. The catalysed reaction is (9Z,12Z,15Z,18Z,21Z)-tetracosapentaenoyl-CoA + 2 Fe(II)-[cytochrome b5] + O2 + 2 H(+) = (6Z,9Z,12Z,15Z,18Z,21Z)-tetracosahexaenoyl-CoA + 2 Fe(III)-[cytochrome b5] + 2 H2O. It catalyses the reaction (11E)-octadecenoyl-CoA + 2 Fe(II)-[cytochrome b5] + O2 + 2 H(+) = (6Z,11E)-octadecadienoyl-CoA + 2 Fe(III)-[cytochrome b5] + 2 H2O. The enzyme catalyses (11Z,14Z)-eicosadienoyl-CoA + 2 Fe(II)-[cytochrome b5] + O2 + 2 H(+) = (8Z,11Z,14Z)-eicosatrienoyl-CoA + 2 Fe(III)-[cytochrome b5] + 2 H2O. It carries out the reaction (11Z,14Z,17Z)-eicosatrienoyl-CoA + 2 Fe(II)-[cytochrome b5] + O2 + 2 H(+) = (8Z,11Z,14Z,17Z)-eicosatetraenoyl-CoA + 2 Fe(III)-[cytochrome b5] + 2 H2O. It participates in lipid metabolism; polyunsaturated fatty acid biosynthesis. Functionally, involved in the biosynthesis of highly unsaturated fatty acids (HUFA) from the essential polyunsaturated fatty acids (PUFA) linoleic acid (LA) (18:2n-6) and alpha-linolenic acid (ALA) (18:3n-3) precursors, acting as a fatty acyl-coenzyme A (CoA) desaturase that introduces a cis double bond at carbon 6 of the fatty acyl chain. Catalyzes the first and rate limiting step in this pathway which is the desaturation of LA (18:2n-6) and ALA (18:3n-3) into gamma-linoleate (GLA) (18:3n-6) and stearidonate (18:4n-3), respectively. Subsequently, in the biosynthetic pathway of HUFA n-3 series, it desaturates tetracosapentaenoate (24:5n-3) to tetracosahexaenoate (24:6n-3), which is then converted to docosahexaenoate (DHA)(22:6n-3), an important lipid for nervous system function. It can also desaturate (11E)-octadecenoate (trans-vaccenoate) at carbon 6 generating (6Z,11E)-octadecadienoate. In addition to Delta-6 activity, this enzyme exhibits Delta-8 activity with slight biases toward n-3 fatty acyl-CoA substrates. This is Acyl-CoA 6-desaturase from Mus musculus (Mouse).